We begin with the raw amino-acid sequence, 271 residues long: Formamidopyrimidine-DNA glycosylase (271 aa).

The Schiff-base intermediate with DNA role is filled by P2. E3 acts as the Proton donor in catalysis. The active-site Proton donor; for beta-elimination activity is the K58. Residues H91, R110, and R152 each coordinate DNA. The FPG-type zinc-finger motif lies at 237–271; that stretch reads NVYGRGGKACKKCRKPLTEKKLGQRTTVYCTHCQK. The active-site Proton donor; for delta-elimination activity is R261.

It belongs to the FPG family. Monomer. Requires Zn(2+) as cofactor.

The enzyme catalyses Hydrolysis of DNA containing ring-opened 7-methylguanine residues, releasing 2,6-diamino-4-hydroxy-5-(N-methyl)formamidopyrimidine.. It carries out the reaction 2'-deoxyribonucleotide-(2'-deoxyribose 5'-phosphate)-2'-deoxyribonucleotide-DNA = a 3'-end 2'-deoxyribonucleotide-(2,3-dehydro-2,3-deoxyribose 5'-phosphate)-DNA + a 5'-end 5'-phospho-2'-deoxyribonucleoside-DNA + H(+). In terms of biological role, involved in base excision repair of DNA damaged by oxidation or by mutagenic agents. Acts as a DNA glycosylase that recognizes and removes damaged bases. Has a preference for oxidized purines, such as 7,8-dihydro-8-oxoguanine (8-oxoG). Has AP (apurinic/apyrimidinic) lyase activity and introduces nicks in the DNA strand. Cleaves the DNA backbone by beta-delta elimination to generate a single-strand break at the site of the removed base with both 3'- and 5'-phosphates. The protein is Formamidopyrimidine-DNA glycosylase of Saccharophagus degradans (strain 2-40 / ATCC 43961 / DSM 17024).